Consider the following 74-residue polypeptide: Conotoxin Vc7.2 (74 aa).

The first 22 residues, 1 to 22, serve as a signal peptide directing secretion; it reads MNTAGRLLLLCLVLGLVFESLG. Positions 23-49 are excised as a propeptide; that stretch reads IPVADDLEADRDTDPDEKDPSVHNYWR. 3 disulfides stabilise this stretch: cysteine 53–cysteine 63, cysteine 58–cysteine 68, and cysteine 62–cysteine 73.

In terms of tissue distribution, expressed by the venom duct.

It localises to the secreted. Functionally, probable toxin with unknown function. Does not produce any changes in intracellular calcium levels in mouse dorsal root ganglion cells. In vivo, does not produce behavioral changes when intracranially injected into mice. This Conus victoriae (Queen Victoria cone) protein is Conotoxin Vc7.2.